The sequence spans 167 residues: Large ribosomal subunit protein uL10 (167 aa).

Belongs to the universal ribosomal protein uL10 family. As to quaternary structure, part of the ribosomal stalk of the 50S ribosomal subunit. The N-terminus interacts with L11 and the large rRNA to form the base of the stalk. The C-terminus forms an elongated spine to which L12 dimers bind in a sequential fashion forming a multimeric L10(L12)X complex.

Its function is as follows. Forms part of the ribosomal stalk, playing a central role in the interaction of the ribosome with GTP-bound translation factors. In Yersinia enterocolitica serotype O:8 / biotype 1B (strain NCTC 13174 / 8081), this protein is Large ribosomal subunit protein uL10.